Here is an 814-residue protein sequence, read N- to C-terminus: Rho GTPase-activating protein 26 (814 aa).

The region spanning 7–262 (EFSDCCLDSP…MKENPLEHKT (256 aa)) is the BAR domain. A PH domain is found at 265–369 (PYTMEGYLYV…WMEAMDGREP (105 aa)). Residues 383-568 (AQLDSIGFSI…ILIENHEKIF (186 aa)) enclose the Rho-GAP domain. Disordered regions lie at residues 584–618 (SRKK…QRNS) and 638–696 (SSSL…SSDS). Composition is skewed to low complexity over residues 591–600 (SKPPSCSKRP) and 638–661 (SSSL…SRPS). Pro residues predominate over residues 662–672 (SLPPNPSPTSP). Ser-668 is subject to Phosphoserine. Position 670 is a phosphothreonine (Thr-670). Ser-671 is modified (phosphoserine). Positions 673 to 696 (LSPSWPMFSAPSSPMPTSSTSSDS) are enriched in low complexity. Residues 756–814 (TPFRKAKALYACQAEHDSELSFTAGTVFDNVHPSQEPGWLEGTLNGKTGLIPENYVEFL) form the SH3 domain.

In terms of assembly, interacts with NYAP1, NYAP2 and MYO16. Interacts with MICAL1 and WDR44. Binds to the C-terminus of PTK2/FAK1. Phosphorylated in a PINK1-dependent fashion promoting retrograde mitochondrial trafficking and clustering.

It localises to the cell junction. Its subcellular location is the focal adhesion. The protein resides in the cytoplasm. The protein localises to the cytoskeleton. It is found in the endosome membrane. Its function is as follows. GTPase-activating protein for RHOA and CDC42. Facilitates mitochondrial quality control by promoting Parkin-mediated recruitment of autophagosomes to damaged mitochondria. Associates with MICAL1 on the endosomal membrane to promote Rab8-Rab10-dependent tubule extension. After dissociation of MICAL1, recruits WDR44 which connects the endoplasmic reticulum (ER) with the endosomal tubule, thereby participating in the export of a subset of neosynthesized proteins. The protein is Rho GTPase-activating protein 26 (Arhgap26) of Mus musculus (Mouse).